The sequence spans 169 residues: Large ribosomal subunit protein uL10 (169 aa).

This sequence belongs to the universal ribosomal protein uL10 family. As to quaternary structure, part of the ribosomal stalk of the 50S ribosomal subunit. The N-terminus interacts with L11 and the large rRNA to form the base of the stalk. The C-terminus forms an elongated spine to which L12 dimers bind in a sequential fashion forming a multimeric L10(L12)X complex.

Functionally, forms part of the ribosomal stalk, playing a central role in the interaction of the ribosome with GTP-bound translation factors. In Rickettsia peacockii (strain Rustic), this protein is Large ribosomal subunit protein uL10.